The primary structure comprises 479 residues: F-box protein At5g51380 (479 aa).

Residues 1–20 (MTFREKMPTSPKSPLRRRRS) form a disordered region. Positions 62 to 108 (DRTLSLSDSLLLKILEKLPESQNEDVSLVCKRWLSVQGRRLRSMKVF) constitute an F-box domain.

The sequence is that of F-box protein At5g51380 from Arabidopsis thaliana (Mouse-ear cress).